Here is a 301-residue protein sequence, read N- to C-terminus: Amylovoran biosynthesis glycosyltransferase AmsB (301 aa).

The protein belongs to the glycosyltransferase 2 family.

It participates in glycan metabolism; exopolysaccharide biosynthesis. Its function is as follows. Involved in the biosynthesis of amylovoran, which functions as a virulence factor. May function as a glycosyl transferase which transfers galactose from UDP-galactose to a lipid-linked amylovoran-subunit precursor. This is Amylovoran biosynthesis glycosyltransferase AmsB (amsB) from Erwinia amylovora (Fire blight bacteria).